Consider the following 423-residue polypeptide: Kynurenine--oxoglutarate transaminase 1 (423 aa).

Gly36 serves as a coordination point for substrate. Residue Lys82 is modified to N6-succinyllysine. Asn185 lines the substrate pocket. N6-(pyridoxal phosphate)lysine is present on Lys247. Arg398 is a substrate binding site.

This sequence belongs to the class-I pyridoxal-phosphate-dependent aminotransferase family. As to quaternary structure, homodimer. Pyridoxal 5'-phosphate is required as a cofactor. As to expression, detected in kidney.

The protein localises to the cytoplasm. Its subcellular location is the cytosol. It is found in the mitochondrion matrix. The catalysed reaction is L-kynurenine + 2-oxoglutarate = kynurenate + L-glutamate + H2O. It catalyses the reaction 3-phenylpyruvate + L-glutamine = 2-oxoglutaramate + L-phenylalanine. The enzyme catalyses an S-substituted L-cysteine + H2O = a thiol + pyruvate + NH4(+). The protein operates within amino-acid degradation; L-kynurenine degradation; kynurenate from L-kynurenine: step 1/2. With respect to regulation, inhibited by aminooxyacetate (in vitro). Its function is as follows. Catalyzes the irreversible transamination of the L-tryptophan metabolite L-kynurenine to form kynurenic acid (KA), an intermediate in the tryptophan catabolic pathway which is also a broad spectrum antagonist of the three ionotropic excitatory amino acid receptors among others. Metabolizes the cysteine conjugates of certain halogenated alkenes and alkanes to form reactive metabolites. Catalyzes the beta-elimination of S-conjugates and Se-conjugates of L-(seleno)cysteine, resulting in the cleavage of the C-S or C-Se bond. This chain is Kynurenine--oxoglutarate transaminase 1, found in Rattus norvegicus (Rat).